The chain runs to 370 residues: uncharacterized protein (370 aa).

10 helical membrane passes run 6 to 26, 49 to 69, 79 to 99, 111 to 131, 143 to 163, 167 to 187, 206 to 226, 236 to 256, 307 to 327, and 333 to 353; these read AVVF…CLGN, IGIV…VAPF, SFAN…GEMA, FLGT…LGII, ILIG…CAGF, MIGK…FGLW, MVAI…IVLI, IQTT…TAFI, VAFA…VAGM, and AAMI…AAWM.

It belongs to the EutH family.

It localises to the cell membrane. This is an uncharacterized protein from Bacillus subtilis (strain 168).